The primary structure comprises 362 residues: Sulfoquinovose monooxygenase (362 aa).

Belongs to the SsuD family.

It catalyses the reaction 6-sulfo-D-quinovose + FMNH2 + O2 = 6-dehydro-D-glucose + FMN + sulfite + H2O + 2 H(+). Its function is as follows. Part of the alkanesulfonate monooxygenase (sulfo-ASMO) pathway, a D-sulfoquinovose degradation pathway that enables the complete utilization of all carbons within sulfoquinovose (SQ) with concomitant production of inorganic sulfite. Catalyzes the oxidative desulfurization of sulfoquinovose to sulfite and 6-dehydro-D-glucose. The protein is Sulfoquinovose monooxygenase of Novosphingobium aromaticivorans (strain ATCC 700278 / DSM 12444 / CCUG 56034 / CIP 105152 / NBRC 16084 / F199).